Here is a 451-residue protein sequence, read N- to C-terminus: Tubulin gamma-1 chain (451 aa).

Position 142–148 (142–148) interacts with GTP; the sequence is AGGTGSG.

The protein belongs to the tubulin family.

The protein resides in the cytoplasm. The protein localises to the cytoskeleton. It localises to the microtubule organizing center. It is found in the centrosome. Its subcellular location is the spindle. Its function is as follows. Tubulin is the major constituent of microtubules. The gamma chain is found at microtubule organizing centers (MTOC) such as the spindle poles or the centrosome, suggesting that it is involved in the minus-end nucleation of microtubule assembly. The polypeptide is Tubulin gamma-1 chain (tubg1) (Xenopus laevis (African clawed frog)).